A 469-amino-acid polypeptide reads, in one-letter code: Solute carrier family 52, riboflavin transporter, member 3 (469 aa).

The Cytoplasmic portion of the chain corresponds to M1–H6. Residues L7 to L27 form a helical membrane-spanning segment. Residues P28 to Y43 lie on the Extracellular side of the membrane. A helical transmembrane segment spans residues L44 to F64. Residues Q65 to E71 lie on the Cytoplasmic side of the membrane. Residues V72–L92 traverse the membrane as a helical segment. Over W93–S105 the chain is Extracellular. Residue N94 is glycosylated (N-linked (GlcNAc...) asparagine). The chain crosses the membrane as a helical span at residues I106 to F126. Residues L127–Y137 lie on the Cytoplasmic side of the membrane. A helical membrane pass occupies residues L138–A158. The Extracellular portion of the chain corresponds to Q159 to P220. A glycan (N-linked (GlcNAc...) asparagine) is linked at N168. Residues L221 to L241 traverse the membrane as a helical segment. Over Q242–P297 the chain is Cytoplasmic. S251 carries the post-translational modification Phosphoserine. A disordered region spans residues R266–E290. Residues A298–L318 form a helical membrane-spanning segment. Topologically, residues P319–H335 are extracellular. The helical transmembrane segment at L336 to P356 threads the bilayer. Residues H357–P361 are Cytoplasmic-facing. Residues F362 to V382 traverse the membrane as a helical segment. Residues M383–E396 are Extracellular-facing. A helical transmembrane segment spans residues I397–L417. The Cytoplasmic portion of the chain corresponds to G418 to S427. Residues A428–F448 traverse the membrane as a helical segment. At P449 to A469 the chain is on the extracellular side.

It belongs to the riboflavin transporter family.

It is found in the cell membrane. The catalysed reaction is riboflavin(in) = riboflavin(out). In terms of biological role, plasma membrane transporter mediating the uptake by cells of the water soluble vitamin B2/riboflavin that plays a key role in biochemical oxidation-reduction reactions of the carbohydrate, lipid, and amino acid metabolism. The polypeptide is Solute carrier family 52, riboflavin transporter, member 3 (SLC52A3) (Ailuropoda melanoleuca (Giant panda)).